We begin with the raw amino-acid sequence, 257 residues long: NAD-capped RNA hydrolase NudC (257 aa).

The substrate site is built by K25 and R69. Residues C98 and C101 each contribute to the Zn(2+) site. E111 contributes to the substrate binding site. Zn(2+) is bound by residues C116 and C119. Substrate is bound at residue Y124. Residues 125–248 (PQIAPCIIVA…TVARRLIEDT (124 aa)) form the Nudix hydrolase domain. A divalent metal cation contacts are provided by A158, E174, and E178. Positions 159-180 (GFVEVGETLEQAVAREVMEESG) match the Nudix box motif. 192–199 (QPWPFPQS) is a substrate binding site. E219 is a binding site for a divalent metal cation. Residue A241 participates in substrate binding.

The protein belongs to the Nudix hydrolase family. NudC subfamily. In terms of assembly, homodimer. Mg(2+) serves as cofactor. Mn(2+) is required as a cofactor. Requires Zn(2+) as cofactor.

It catalyses the reaction a 5'-end NAD(+)-phospho-ribonucleoside in mRNA + H2O = a 5'-end phospho-adenosine-phospho-ribonucleoside in mRNA + beta-nicotinamide D-ribonucleotide + 2 H(+). The catalysed reaction is NAD(+) + H2O = beta-nicotinamide D-ribonucleotide + AMP + 2 H(+). The enzyme catalyses NADH + H2O = reduced beta-nicotinamide D-ribonucleotide + AMP + 2 H(+). In terms of biological role, mRNA decapping enzyme that specifically removes the nicotinamide adenine dinucleotide (NAD) cap from a subset of mRNAs by hydrolyzing the diphosphate linkage to produce nicotinamide mononucleotide (NMN) and 5' monophosphate mRNA. The NAD-cap is present at the 5'-end of some mRNAs and stabilizes RNA against 5'-processing. Has preference for mRNAs with a 5'-end purine. Catalyzes the hydrolysis of a broad range of dinucleotide pyrophosphates. The protein is NAD-capped RNA hydrolase NudC of Escherichia coli O157:H7.